The following is a 458-amino-acid chain: Smoothelin-like protein 2 (458 aa).

The stretch at 24 to 88 forms a coiled coil; that stretch reads LEGAVRALHE…RQVESLGLTT (65 aa). 3 disordered regions span residues 87–111, 123–142, and 151–312; these read TTGLAPAPGTPSPPPAPGVPNRAPR, FSLSGRSQSLDHHDEASELE, and IIEN…GAQA. Over residues 94 to 104 the composition is skewed to pro residues; the sequence is PGTPSPPPAPG. Phosphothreonine is present on Thr96. Residues Ser98, Ser126, and Ser131 each carry the phosphoserine modification. Basic and acidic residues predominate over residues 131 to 142; sequence SLDHHDEASELE. 2 stretches are compositionally biased toward low complexity: residues 158-167 and 209-220; these read PGADPGDGPP and TSATALSPTSAA. Polar residues predominate over residues 225-244; sequence LSSSPSEATTPWTPSPSEKN. Low complexity predominate over residues 245 to 254; it reads SSLPRSLSSS. Ser252, Ser254, and Ser267 each carry phosphoserine. The span at 270-283 shows a compositional bias: pro residues; sequence LVTPPQSPPSPQPP. Thr272 is subject to Phosphothreonine. At Ser276 the chain carries Phosphoserine. The span at 290 to 299 shows a compositional bias: basic and acidic residues; the sequence is RPGERRRELV. The segment covering 300-310 has biased composition (polar residues); it reads RSQTLPRTSGA. At Ser341 the chain carries Phosphoserine. The region spanning 348 to 455 is the Calponin-homology (CH) domain; that stretch reads SSIKQILLEW…YVQSLYNHLR (108 aa).

Belongs to the smoothelin family.

This chain is Smoothelin-like protein 2 (SMTNL2), found in Bos taurus (Bovine).